Here is a 260-residue protein sequence, read N- to C-terminus: Neuraminyllactose-binding hemagglutinin (260 aa).

The N-terminal stretch at 1–27 is a signal peptide; sequence MKTNGHFKDFAWKKCLLGASVGALLVG. Cysteine 28 carries N-palmitoyl cysteine lipidation. Cysteine 28 carries the S-diacylglycerol cysteine lipid modification. An N-acetyl-neuraminyl-alpha(2,3)-lactose binding motif region spans residues 134-139; it reads KRTIQK.

Its subcellular location is the cell outer membrane. This Helicobacter pylori (Campylobacter pylori) protein is Neuraminyllactose-binding hemagglutinin (hpaA).